A 464-amino-acid polypeptide reads, in one-letter code: Bifunctional protein GlmU (464 aa).

The segment at 1 to 236 (MRAVILAAGL…PTEALGVNTR (236 aa)) is pyrophosphorylase. UDP-N-acetyl-alpha-D-glucosamine contacts are provided by residues 6–9 (LAAG), lysine 20, and 77–78 (GT). Aspartate 102 contacts Mg(2+). 4 residues coordinate UDP-N-acetyl-alpha-D-glucosamine: glycine 145, glutamate 161, asparagine 176, and asparagine 234. Asparagine 234 contributes to the Mg(2+) binding site. Positions 237–257 (WDLALVENVIKLKIARYWAER) are linker. The segment at 258–464 (GVTVHYPETV…GRGKKKLQKD (207 aa)) is N-acetyltransferase. 2 residues coordinate UDP-N-acetyl-alpha-D-glucosamine: arginine 340 and lysine 358. The active-site Proton acceptor is the histidine 370. UDP-N-acetyl-alpha-D-glucosamine is bound by residues tyrosine 373 and asparagine 384. Residues alanine 387, 393 to 394 (NY), serine 412, glycine 430, and arginine 447 contribute to the acetyl-CoA site.

It in the N-terminal section; belongs to the N-acetylglucosamine-1-phosphate uridyltransferase family. The protein in the C-terminal section; belongs to the transferase hexapeptide repeat family. As to quaternary structure, homotrimer. It depends on Mg(2+) as a cofactor.

It localises to the cytoplasm. The enzyme catalyses alpha-D-glucosamine 1-phosphate + acetyl-CoA = N-acetyl-alpha-D-glucosamine 1-phosphate + CoA + H(+). It catalyses the reaction N-acetyl-alpha-D-glucosamine 1-phosphate + UTP + H(+) = UDP-N-acetyl-alpha-D-glucosamine + diphosphate. The protein operates within nucleotide-sugar biosynthesis; UDP-N-acetyl-alpha-D-glucosamine biosynthesis; N-acetyl-alpha-D-glucosamine 1-phosphate from alpha-D-glucosamine 6-phosphate (route II): step 2/2. Its pathway is nucleotide-sugar biosynthesis; UDP-N-acetyl-alpha-D-glucosamine biosynthesis; UDP-N-acetyl-alpha-D-glucosamine from N-acetyl-alpha-D-glucosamine 1-phosphate: step 1/1. It functions in the pathway bacterial outer membrane biogenesis; LPS lipid A biosynthesis. Its function is as follows. Catalyzes the last two sequential reactions in the de novo biosynthetic pathway for UDP-N-acetylglucosamine (UDP-GlcNAc). The C-terminal domain catalyzes the transfer of acetyl group from acetyl coenzyme A to glucosamine-1-phosphate (GlcN-1-P) to produce N-acetylglucosamine-1-phosphate (GlcNAc-1-P), which is converted into UDP-GlcNAc by the transfer of uridine 5-monophosphate (from uridine 5-triphosphate), a reaction catalyzed by the N-terminal domain. The protein is Bifunctional protein GlmU of Aquifex aeolicus (strain VF5).